A 311-amino-acid chain; its full sequence is Lipoyl synthase (311 aa).

7 residues coordinate [4Fe-4S] cluster: Cys55, Cys60, Cys66, Cys81, Cys85, Cys88, and Ser292. The Radical SAM core domain maps to 67–281 (WEDREATFLI…ARFAEGLGFA (215 aa)).

This sequence belongs to the radical SAM superfamily. Lipoyl synthase family. [4Fe-4S] cluster serves as cofactor.

Its subcellular location is the cytoplasm. It catalyses the reaction [[Fe-S] cluster scaffold protein carrying a second [4Fe-4S](2+) cluster] + N(6)-octanoyl-L-lysyl-[protein] + 2 oxidized [2Fe-2S]-[ferredoxin] + 2 S-adenosyl-L-methionine + 4 H(+) = [[Fe-S] cluster scaffold protein] + N(6)-[(R)-dihydrolipoyl]-L-lysyl-[protein] + 4 Fe(3+) + 2 hydrogen sulfide + 2 5'-deoxyadenosine + 2 L-methionine + 2 reduced [2Fe-2S]-[ferredoxin]. It participates in protein modification; protein lipoylation via endogenous pathway; protein N(6)-(lipoyl)lysine from octanoyl-[acyl-carrier-protein]: step 2/2. In terms of biological role, catalyzes the radical-mediated insertion of two sulfur atoms into the C-6 and C-8 positions of the octanoyl moiety bound to the lipoyl domains of lipoate-dependent enzymes, thereby converting the octanoylated domains into lipoylated derivatives. The sequence is that of Lipoyl synthase from Mycobacterium bovis (strain ATCC BAA-935 / AF2122/97).